A 318-amino-acid chain; its full sequence is Glycine--tRNA ligase alpha subunit (318 aa).

The protein belongs to the class-II aminoacyl-tRNA synthetase family. As to quaternary structure, tetramer of two alpha and two beta subunits.

Its subcellular location is the cytoplasm. The enzyme catalyses tRNA(Gly) + glycine + ATP = glycyl-tRNA(Gly) + AMP + diphosphate. The sequence is that of Glycine--tRNA ligase alpha subunit (glyQ) from Moraxella catarrhalis (Branhamella catarrhalis).